The primary structure comprises 95 residues: MNPKHWGRAVWTIIFIVLSQAGLDGNIEACKRKLYTIVSTLPCPACRRHATIAIEDNNVMSSDDLNYIYYFFIRLFNNLAFDPKYAIDVSKVKPL.

The Intravirion portion of the chain corresponds to 1-8 (MNPKHWGR). The region spanning 1-95 (MNPKHWGRAV…AIDVSKVKPL (95 aa)) is the ERV/ALR sulfhydryl oxidase domain. The chain crosses the membrane as a helical span at residues 9 to 25 (AVWTIIFIVLSQAGLDG). Residues 26-95 (NIEACKRKLY…AIDVSKVKPL (70 aa)) are Virion surface-facing. A disulfide bridge connects residues Cys-43 and Cys-46.

The protein belongs to the orthopoxvirus OPG072 family. In terms of assembly, interacts with OPG128; this interaction involves formation of a transient disulfide-bonded intermediate, allowing disulfide bond transfer. FAD serves as cofactor.

Its subcellular location is the virion membrane. The protein resides in the host cytoplasm. The catalysed reaction is 2 R'C(R)SH + O2 = R'C(R)S-S(R)CR' + H2O2. Functionally, FAD-dependent sulfhydryl oxidase that catalyzes disulfide bond formation. The complete pathway for formation of disulfide bonds in intracellular virion membrane proteins sequentially involves thiol-disulfide transfer between OPG072, OPG128 and OPG088. This Monkeypox virus protein is Probable FAD-linked sulfhydryl oxidase OPG072 (OPG072).